Here is a 2894-residue protein sequence, read N- to C-terminus: Bifunctional DNA-directed RNA polymerase subunit beta-beta' (2894 aa).

The interval 1 to 1378 (MANFTKLKNR…DVNIYGDEQD (1378 aa)) is DNA-directed RNA polymerase subunit beta. The tract at residues 1385–2894 (PIAIKEDERP…QEEYEEDEEE (1510 aa)) is DNA-directed RNA polymerase subunit beta'. Residues Cys1450, Cys1452, Cys1465, and Cys1468 each coordinate Zn(2+). 3 residues coordinate Mg(2+): Asp1849, Asp1851, and Asp1853. Zn(2+) contacts are provided by Cys2179, Cys2253, Cys2260, and Cys2263.

This sequence in the N-terminal section; belongs to the RNA polymerase beta chain family. It in the C-terminal section; belongs to the RNA polymerase beta' chain family. In terms of assembly, the RNAP catalytic core consists of 2 alpha, 1 beta/beta' and 1 omega subunit. When a sigma factor is associated with the core the holoenzyme is formed, which can initiate transcription. It depends on Mg(2+) as a cofactor. Zn(2+) is required as a cofactor.

It catalyses the reaction RNA(n) + a ribonucleoside 5'-triphosphate = RNA(n+1) + diphosphate. DNA-dependent RNA polymerase catalyzes the transcription of DNA into RNA using the four ribonucleoside triphosphates as substrates. This chain is Bifunctional DNA-directed RNA polymerase subunit beta-beta' (rpoBC), found in Helicobacter hepaticus (strain ATCC 51449 / 3B1).